The sequence spans 367 residues: S-adenosylmethionine:tRNA ribosyltransferase-isomerase (367 aa).

The disordered stretch occupies residues 150-182 (RHGEEEESSDEAISSQNPEIATESKRTPSNDDK). Residues 171 to 182 (TESKRTPSNDDK) show a composition bias toward basic and acidic residues.

This sequence belongs to the QueA family. Monomer.

It localises to the cytoplasm. It carries out the reaction 7-aminomethyl-7-carbaguanosine(34) in tRNA + S-adenosyl-L-methionine = epoxyqueuosine(34) in tRNA + adenine + L-methionine + 2 H(+). It participates in tRNA modification; tRNA-queuosine biosynthesis. Its function is as follows. Transfers and isomerizes the ribose moiety from AdoMet to the 7-aminomethyl group of 7-deazaguanine (preQ1-tRNA) to give epoxyqueuosine (oQ-tRNA). This is S-adenosylmethionine:tRNA ribosyltransferase-isomerase from Rickettsia felis (strain ATCC VR-1525 / URRWXCal2) (Rickettsia azadi).